We begin with the raw amino-acid sequence, 285 residues long: Diphthine methyl ester synthase (285 aa).

Residues L9, D84, G87, S112–I113, L163, V221, and H246 contribute to the S-adenosyl-L-methionine site.

This sequence belongs to the diphthine synthase family.

Its subcellular location is the cytoplasm. It carries out the reaction 2-[(3S)-amino-3-carboxypropyl]-L-histidyl-[translation elongation factor 2] + 4 S-adenosyl-L-methionine = diphthine methyl ester-[translation elongation factor 2] + 4 S-adenosyl-L-homocysteine + 3 H(+). The protein operates within protein modification; peptidyl-diphthamide biosynthesis. Its function is as follows. S-adenosyl-L-methionine-dependent methyltransferase that catalyzes four methylations of the modified target histidine residue in translation elongation factor 2 (EF-2), to form an intermediate called diphthine methyl ester. The four successive methylation reactions represent the second step of diphthamide biosynthesis. This chain is Diphthine methyl ester synthase (dph5), found in Emericella nidulans (strain FGSC A4 / ATCC 38163 / CBS 112.46 / NRRL 194 / M139) (Aspergillus nidulans).